The sequence spans 177 residues: Transcription factor E (177 aa).

An HTH TFE/IIEalpha-type domain is found at 9–91 (VEELLNELVG…YWRINYDKAL (83 aa)).

The protein belongs to the TFE family. Monomer. Interaction with RNA polymerase subunits RpoF and RpoE is necessary for Tfe stimulatory transcription activity. Able to interact with Tbp and RNA polymerase in the absence of DNA promoter. Interacts both with the preinitiation and elongation complexes.

In terms of biological role, transcription factor that plays a role in the activation of archaeal genes transcribed by RNA polymerase. Facilitates transcription initiation by enhancing TATA-box recognition by TATA-box-binding protein (Tbp), and transcription factor B (Tfb) and RNA polymerase recruitment. Not absolutely required for transcription in vitro, but particularly important in cases where Tbp or Tfb function is not optimal. It dynamically alters the nucleic acid-binding properties of RNA polymerases by stabilizing the initiation complex and destabilizing elongation complexes. Seems to translocate with the RNA polymerase following initiation and acts by binding to the non template strand of the transcription bubble in elongation complexes. This is Transcription factor E from Archaeoglobus fulgidus (strain ATCC 49558 / DSM 4304 / JCM 9628 / NBRC 100126 / VC-16).